Here is a 77-residue protein sequence, read N- to C-terminus: Large ribosomal subunit protein bL28 (77 aa).

It belongs to the bacterial ribosomal protein bL28 family.

The chain is Large ribosomal subunit protein bL28 from Karelsulcia muelleri (strain GWSS) (Sulcia muelleri).